A 253-amino-acid chain; its full sequence is Claudin domain-containing protein 1 (253 aa).

The helical transmembrane segment at Phe-5–Ala-25 threads the bilayer. 2 N-linked (GlcNAc...) asparagine glycosylation sites follow: Asn-42 and Asn-72. 3 helical membrane-spanning segments follow: residues Phe-141–Ala-161, Ile-175–Ile-195, and Phe-216–Ala-236.

The protein belongs to the PMP-22/EMP/MP20 family.

The protein localises to the cell junction. It localises to the tight junction. The protein resides in the cell membrane. Functionally, plays a role in negatively regulating the permeability of cells to small molecules. The sequence is that of Claudin domain-containing protein 1 (CLDND1) from Macaca fascicularis (Crab-eating macaque).